Reading from the N-terminus, the 432-residue chain is DnaJ-like protein 1 (432 aa).

The J domain occupies 4-73 (DTEYYDLLGV…RAKYDKYGRK (70 aa)). The disordered stretch occupies residues 117 to 187 (NAEDEAEKEK…KKNEQVGAEA (71 aa)).

The protein belongs to the DnaJ family. Interacts with SLN1.

Its subcellular location is the cytoplasm. Its function is as follows. Required for peroxisomal protein import which maintains the function of peroxisomes. The polypeptide is DnaJ-like protein 1 (DJP1) (Saccharomyces cerevisiae (strain ATCC 204508 / S288c) (Baker's yeast)).